A 451-amino-acid polypeptide reads, in one-letter code: Glycosyltransferase-like At2g41451 (451 aa).

Positions 1–23 (MASSDSSYSRKFLLITFLPLSLA) are cleaved as a signal peptide. Asn-36, Asn-137, Asn-168, Asn-441, and Asn-444 each carry an N-linked (GlcNAc...) asparagine glycan. Residues 109 to 345 (QTLPWIFYHK…TYSKFSDLTS (237 aa)) enclose the GT92 domain.

The protein belongs to the glycosyltransferase 92 family.

Its subcellular location is the secreted. The protein resides in the cell wall. It localises to the cytoplasm. It is found in the cell membrane. In terms of biological role, involved in the coordination between cell elongation and cellulose synthesis by promoting the expression of genes involved in cell elongation and cellulose synthesis. Acts as a regulator of plasmodesmatal permeability. Maybe a glycosyltransferase. This is Glycosyltransferase-like At2g41451 from Arabidopsis thaliana (Mouse-ear cress).